Reading from the N-terminus, the 300-residue chain is NAD kinase (300 aa).

The active-site Proton acceptor is the Asp75. Residues 75-76 (DG), 149-150 (ND), Arg177, Asp179, 190-195 (TAYALS), Ala214, and Gln248 contribute to the NAD(+) site.

Belongs to the NAD kinase family. The cofactor is a divalent metal cation.

The protein resides in the cytoplasm. The enzyme catalyses NAD(+) + ATP = ADP + NADP(+) + H(+). Functionally, involved in the regulation of the intracellular balance of NAD and NADP, and is a key enzyme in the biosynthesis of NADP. Catalyzes specifically the phosphorylation on 2'-hydroxyl of the adenosine moiety of NAD to yield NADP. The chain is NAD kinase from Burkholderia pseudomallei (strain K96243).